An 86-amino-acid polypeptide reads, in one-letter code: Immunity protein CdiI-1 (86 aa).

Interacts with the C-terminal fragment (CT) of cognate toxin protein CdiA-EC869.

In terms of biological role, immunity protein component of a toxin-immunity protein module, which functions as a cellular contact-dependent growth inhibition (CDI) system. CDI modules allow bacteria to communicate with and inhibit the growth of closely related neighboring bacteria in a contact-dependent fashion. Neutralizes the toxic activity of cognate toxin CdiA-EC869 (the C-terminal 289 residue CT fragment). Does not inhibit toxic activity of CdiA from other toxin-immunity modules or strains of E.coli. The protein is Immunity protein CdiI-1 of Escherichia coli O157:H7 (strain EC869).